The following is a 116-amino-acid chain: Flagellar hook-basal body complex protein FliE (116 aa).

Belongs to the FliE family.

The protein resides in the bacterial flagellum basal body. This Rhizobium rhizogenes (strain K84 / ATCC BAA-868) (Agrobacterium radiobacter) protein is Flagellar hook-basal body complex protein FliE.